A 273-amino-acid chain; its full sequence is Large ribosomal subunit protein uL2c (273 aa).

This sequence belongs to the universal ribosomal protein uL2 family. As to quaternary structure, part of the 50S ribosomal subunit.

Its subcellular location is the plastid. The protein resides in the apicoplast. The sequence is that of Large ribosomal subunit protein uL2c (rpl2) from Eimeria tenella (Coccidian parasite).